The sequence spans 594 residues: tRNA (uracil-O(2)-)-methyltransferase (594 aa).

Belongs to the TRM44 family.

Its subcellular location is the cytoplasm. It catalyses the reaction uridine(44) in tRNA(Ser) + S-adenosyl-L-methionine = 2'-O-methyluridine(44) in tRNA(Ser) + S-adenosyl-L-homocysteine + H(+). Its function is as follows. Probable adenosyl-L-methionine (AdoMet)-dependent tRNA (uracil-O(2)-)-methyltransferase. The chain is tRNA (uracil-O(2)-)-methyltransferase (TRM44) from Debaryomyces hansenii (strain ATCC 36239 / CBS 767 / BCRC 21394 / JCM 1990 / NBRC 0083 / IGC 2968) (Yeast).